Consider the following 1479-residue polypeptide: ABC transporter ecdL (1479 aa).

3 helical membrane passes run 32–52 (LLFEESILYLPPLLIAASVAL), 82–102 (LSNAAIAIGFVASPIFAWLSF), and 142–162 (IASIFATIVVCKVVLLVVEAM). Asn183 and Asn234 each carry an N-linked (GlcNAc...) asparagine glycan. 2 helical membrane passes run 251–271 (WGGFLPRLCLIGVNYAQPFLV) and 291–311 (SGLIAAYAIVYMGIAVATAAF). Positions 258-535 (LCLIGVNYAQ…FVESLMGLRQ (278 aa)) constitute an ABC transmembrane type-1 1 domain. An N-linked (GlcNAc...) asparagine glycan is attached at Asn345. A run of 2 helical transmembrane segments spans residues 365–382 (LHETWASLIEIALSLWLL) and 391–411 (VAAAMVVLVCLLVSGALSGLL). The N-linked (GlcNAc...) asparagine glycan is linked to Asn427. A run of 2 helical transmembrane segments spans residues 469 to 489 (LLVALVTLSYLSTTMAPTFAF) and 503 to 523 (PLLAAPAFSSLTIMTLLGQAV). One can recognise an ABC transporter 1 domain in the interval 607 to 835 (IVLQNHTASW…GSSLRLEELV (229 aa)). 2 N-linked (GlcNAc...) asparagine glycosylation sites follow: Asn611 and Asn628. 641-648 (GPIGSGKS) serves as a coordination point for ATP. Residues Asn793 and Asn797 are each glycosylated (N-linked (GlcNAc...) asparagine). 5 helical membrane-spanning segments follow: residues 885 to 905 (TIGWGSWWIFIVLCSGFVVAL), 955 to 975 (LFAVWSALAITFFLGACLHLM), 1028 to 1048 (ALIGAVIALILCISAMAVIVY), 1052 to 1072 (YLAATIPGLLGLLYLVQMFYL), and 1135 to 1155 (IWLTLTLDIIVAFLAIILVSI). An ABC transmembrane type-1 2 domain is found at 932 to 1193 (IWLKFWTEAN…LVYNWTALEN (262 aa)). N-linked (GlcNAc...) asparagine glycosylation occurs at Asn1161. A helical transmembrane segment spans residues 1165–1185 (ASIGLALVNLIAFGANMKGLV). Asn1187 is a glycosylation site (N-linked (GlcNAc...) asparagine). An ABC transporter 2 domain is found at 1230-1461 (IKFKSVTASY…RSIFASLLRS (232 aa)). 1264 to 1271 (GRTGCGKS) provides a ligand contact to ATP. The interval 1460-1479 (RSGDEEPGNGHKHESEGEEE) is disordered. The segment covering 1461-1479 (SGDEEPGNGHKHESEGEEE) has biased composition (basic and acidic residues).

The protein belongs to the ABC transporter superfamily. ABCC family. Conjugate transporter (TC 3.A.1.208) subfamily.

It is found in the cell membrane. ABC transporter; part of the gene cluster that mediates the biosynthesis of echinocandin B, a fungal lipidated cyclic hexapeptide that acts as an antifungal agent. This Aspergillus rugulosus (Emericella rugulosa) protein is ABC transporter ecdL.